The sequence spans 932 residues: Protein hir1 (932 aa).

WD repeat units follow at residues 16 to 55 (GHRL…RENE), 72 to 111 (THTG…PGLG), 132 to 171 (GHDN…RLKR), 174 to 213 (AHQS…IEKT), 222 to 265 (PLST…SEIN), 268 to 316 (GHEG…PLLS), and 320 to 361 (VFQK…DMVS). 2 stretches are compositionally biased toward polar residues: residues 405 to 426 (STTD…QKTP) and 441 to 453 (TVDT…SKEQ). Disordered stretches follow at residues 405 to 470 (STTD…NEIP) and 498 to 520 (TPST…LPPQ). The span at 498-507 (TPSTSRLAST) shows a compositional bias: low complexity.

This sequence belongs to the WD repeat HIR1 family. Interacts with his3 and slm9.

It localises to the cytoplasm. The protein resides in the nucleus. Functionally, probably required for replication-independent chromatin assembly. Required for transcriptional silencing in the outer repeat (otr) centromeric repeats and the Tf2 long terminal repeat retrotransposons. Repressor of histone gene transcription in G1 arrested cells. Required for repression of htb1 gene expression outside of S phase. In Schizosaccharomyces pombe (strain 972 / ATCC 24843) (Fission yeast), this protein is Protein hir1 (hip1).